The following is a 65-amino-acid chain: Large ribosomal subunit protein bL35 (65 aa).

The segment at 1–29 (MPKMKTHSGAKKRFKLTGSGKVKRQQANR) is disordered.

It belongs to the bacterial ribosomal protein bL35 family.

This Kocuria rhizophila (strain ATCC 9341 / DSM 348 / NBRC 103217 / DC2201) protein is Large ribosomal subunit protein bL35.